A 298-amino-acid polypeptide reads, in one-letter code: Bifunctional protein FolD (298 aa).

NADP(+) contacts are provided by residues 167–169, Ser192, and Val233; that span reads GRS.

The protein belongs to the tetrahydrofolate dehydrogenase/cyclohydrolase family. In terms of assembly, homodimer.

The enzyme catalyses (6R)-5,10-methylene-5,6,7,8-tetrahydrofolate + NADP(+) = (6R)-5,10-methenyltetrahydrofolate + NADPH. The catalysed reaction is (6R)-5,10-methenyltetrahydrofolate + H2O = (6R)-10-formyltetrahydrofolate + H(+). It participates in one-carbon metabolism; tetrahydrofolate interconversion. In terms of biological role, catalyzes the oxidation of 5,10-methylenetetrahydrofolate to 5,10-methenyltetrahydrofolate and then the hydrolysis of 5,10-methenyltetrahydrofolate to 10-formyltetrahydrofolate. In Chelativorans sp. (strain BNC1), this protein is Bifunctional protein FolD.